The sequence spans 457 residues: UDP-N-acetylmuramoylalanine--D-glutamate ligase (457 aa).

ATP is bound at residue 126-132 (GTAGKGS).

This sequence belongs to the MurCDEF family.

The protein resides in the cytoplasm. The catalysed reaction is UDP-N-acetyl-alpha-D-muramoyl-L-alanine + D-glutamate + ATP = UDP-N-acetyl-alpha-D-muramoyl-L-alanyl-D-glutamate + ADP + phosphate + H(+). It functions in the pathway cell wall biogenesis; peptidoglycan biosynthesis. In terms of biological role, cell wall formation. Catalyzes the addition of glutamate to the nucleotide precursor UDP-N-acetylmuramoyl-L-alanine (UMA). The chain is UDP-N-acetylmuramoylalanine--D-glutamate ligase from Deinococcus radiodurans (strain ATCC 13939 / DSM 20539 / JCM 16871 / CCUG 27074 / LMG 4051 / NBRC 15346 / NCIMB 9279 / VKM B-1422 / R1).